Reading from the N-terminus, the 457-residue chain is Cell division protein FtsA (457 aa).

Belongs to the FtsA/MreB family. As to quaternary structure, self-interacts. Interacts with FtsZ.

The protein resides in the cell membrane. In terms of biological role, cell division protein that is involved in the assembly of the Z ring. May serve as a membrane anchor for the Z ring. Increased expression restores growth to a PBP2b (penA) deletion strain as well as mreCD and rodA deletions, but not gpsB or rodZ deletions. Does not restore wild-type cell morphology to the penA deletion. The sequence is that of Cell division protein FtsA from Streptococcus pneumoniae serotype 2 (strain D39 / NCTC 7466).